The following is a 251-amino-acid chain: Ubiquinone/menaquinone biosynthesis C-methyltransferase UbiE (251 aa).

S-adenosyl-L-methionine contacts are provided by residues Thr74, Asp95, and 123 to 124; that span reads NA.

The protein belongs to the class I-like SAM-binding methyltransferase superfamily. MenG/UbiE family.

It catalyses the reaction a 2-demethylmenaquinol + S-adenosyl-L-methionine = a menaquinol + S-adenosyl-L-homocysteine + H(+). It carries out the reaction a 2-methoxy-6-(all-trans-polyprenyl)benzene-1,4-diol + S-adenosyl-L-methionine = a 5-methoxy-2-methyl-3-(all-trans-polyprenyl)benzene-1,4-diol + S-adenosyl-L-homocysteine + H(+). Its pathway is quinol/quinone metabolism; menaquinone biosynthesis; menaquinol from 1,4-dihydroxy-2-naphthoate: step 2/2. It participates in cofactor biosynthesis; ubiquinone biosynthesis. In terms of biological role, methyltransferase required for the conversion of demethylmenaquinol (DMKH2) to menaquinol (MKH2) and the conversion of 2-polyprenyl-6-methoxy-1,4-benzoquinol (DDMQH2) to 2-polyprenyl-3-methyl-6-methoxy-1,4-benzoquinol (DMQH2). The protein is Ubiquinone/menaquinone biosynthesis C-methyltransferase UbiE of Marinomonas sp. (strain MWYL1).